The chain runs to 254 residues: E3 ubiquitin-protein ligase NEURL3 (254 aa).

In terms of domain architecture, NHR spans 17–174 (ALSFHGDATG…TTKAIELLDP (158 aa)). The segment at 197 to 236 (CVICFHNTANTRLMPCGHSQFCGSCAWHIFKDTARCPMCR) adopts an RING-type zinc-finger fold.

It localises to the cytoplasm. It carries out the reaction S-ubiquitinyl-[E2 ubiquitin-conjugating enzyme]-L-cysteine + [acceptor protein]-L-lysine = [E2 ubiquitin-conjugating enzyme]-L-cysteine + N(6)-ubiquitinyl-[acceptor protein]-L-lysine.. The protein operates within protein modification; protein ubiquitination. In terms of biological role, E3 ubiquitin-protein ligase that plays a role in various biological processes such as lung development or innate immunity. Seems to utilize UBE2E1. Promotes innate antiviral response by catalyzing 'Lys-63'-linked ubiquitination of IRF7. Also inhibits hepatitis C virus assembly by directly binding to viral E1 envelope glycoprotein to disrupt its interaction with E2. Plays an essential role in TLR4-mediated activation of MAPK pathways by promoting 'Lys-48'-linked polyubiquitination of the phosphatase DUSP1/MKP1. The polypeptide is E3 ubiquitin-protein ligase NEURL3 (Neurl3) (Rattus norvegicus (Rat)).